Consider the following 167-residue polypeptide: Ribosome maturation factor RimM (167 aa).

The 73-residue stretch at 94 to 166 (TGRAYLHELI…YMVVPRFDEF (73 aa)) folds into the PRC barrel domain.

The protein belongs to the RimM family. In terms of assembly, binds ribosomal protein uS19.

The protein resides in the cytoplasm. Functionally, an accessory protein needed during the final step in the assembly of 30S ribosomal subunit, possibly for assembly of the head region. Essential for efficient processing of 16S rRNA. May be needed both before and after RbfA during the maturation of 16S rRNA. It has affinity for free ribosomal 30S subunits but not for 70S ribosomes. This is Ribosome maturation factor RimM from Chlorobium phaeobacteroides (strain DSM 266 / SMG 266 / 2430).